The primary structure comprises 421 residues: Histidine--tRNA ligase (421 aa).

Belongs to the class-II aminoacyl-tRNA synthetase family. Homodimer.

Its subcellular location is the cytoplasm. The catalysed reaction is tRNA(His) + L-histidine + ATP = L-histidyl-tRNA(His) + AMP + diphosphate + H(+). This is Histidine--tRNA ligase from Solidesulfovibrio magneticus (strain ATCC 700980 / DSM 13731 / RS-1) (Desulfovibrio magneticus).